A 318-amino-acid chain; its full sequence is 4-diphosphocytidyl-2-C-methyl-D-erythritol kinase (318 aa).

K25 is an active-site residue. An ATP-binding site is contributed by 110 to 120 (PVAGGMAGGSA). D152 is an active-site residue.

The protein belongs to the GHMP kinase family. IspE subfamily.

It carries out the reaction 4-CDP-2-C-methyl-D-erythritol + ATP = 4-CDP-2-C-methyl-D-erythritol 2-phosphate + ADP + H(+). It functions in the pathway isoprenoid biosynthesis; isopentenyl diphosphate biosynthesis via DXP pathway; isopentenyl diphosphate from 1-deoxy-D-xylulose 5-phosphate: step 3/6. In terms of biological role, catalyzes the phosphorylation of the position 2 hydroxy group of 4-diphosphocytidyl-2C-methyl-D-erythritol. The protein is 4-diphosphocytidyl-2-C-methyl-D-erythritol kinase of Mycobacterium tuberculosis (strain ATCC 25177 / H37Ra).